The sequence spans 251 residues: uncharacterized protein (251 aa).

An NADP(+)-binding site is contributed by 14–37; it reads VLGGTSAIGLATARRLIARGARLV. Ser-145 provides a ligand contact to substrate. Tyr-158 serves as the catalytic Proton acceptor.

This sequence belongs to the short-chain dehydrogenases/reductases (SDR) family.

Functionally, may be involved in the biosynthesis of a heptaene-type antibiotic. This is an uncharacterized protein from Streptomyces coelicolor.